We begin with the raw amino-acid sequence, 480 residues long: Siroheme synthase (480 aa).

The tract at residues 1–203 is precorrin-2 dehydrogenase /sirohydrochlorin ferrochelatase; sequence MNYFPIFANL…QQTAQAEQEL (203 aa). Residues 22-23 and 43-44 each bind NAD(+); these read SV and NQ. Position 128 is a phosphoserine (Ser128). Positions 214-480 are uroporphyrinogen-III C-methyltransferase; the sequence is GFVSLVGAGP…GGLNAGQRAA (267 aa). Residue Pro223 participates in S-adenosyl-L-methionine binding. Asp246 (proton acceptor) is an active-site residue. Lys268 (proton donor) is an active-site residue. S-adenosyl-L-methionine is bound by residues 299 to 301, Val304, 329 to 330, Met381, and Gly410; these read GGD and TA.

This sequence in the N-terminal section; belongs to the precorrin-2 dehydrogenase / sirohydrochlorin ferrochelatase family. The protein in the C-terminal section; belongs to the precorrin methyltransferase family.

It catalyses the reaction uroporphyrinogen III + 2 S-adenosyl-L-methionine = precorrin-2 + 2 S-adenosyl-L-homocysteine + H(+). The enzyme catalyses precorrin-2 + NAD(+) = sirohydrochlorin + NADH + 2 H(+). The catalysed reaction is siroheme + 2 H(+) = sirohydrochlorin + Fe(2+). It functions in the pathway cofactor biosynthesis; adenosylcobalamin biosynthesis; precorrin-2 from uroporphyrinogen III: step 1/1. It participates in cofactor biosynthesis; adenosylcobalamin biosynthesis; sirohydrochlorin from precorrin-2: step 1/1. The protein operates within porphyrin-containing compound metabolism; siroheme biosynthesis; precorrin-2 from uroporphyrinogen III: step 1/1. Its pathway is porphyrin-containing compound metabolism; siroheme biosynthesis; siroheme from sirohydrochlorin: step 1/1. It functions in the pathway porphyrin-containing compound metabolism; siroheme biosynthesis; sirohydrochlorin from precorrin-2: step 1/1. In terms of biological role, multifunctional enzyme that catalyzes the SAM-dependent methylations of uroporphyrinogen III at position C-2 and C-7 to form precorrin-2 via precorrin-1. Then it catalyzes the NAD-dependent ring dehydrogenation of precorrin-2 to yield sirohydrochlorin. Finally, it catalyzes the ferrochelation of sirohydrochlorin to yield siroheme. The polypeptide is Siroheme synthase (Neisseria meningitidis serogroup C (strain 053442)).